Reading from the N-terminus, the 117-residue chain is DNA-directed RNA polymerase subunit omega (117 aa).

Positions 96–105 (KEEAEEEAKQ) are enriched in basic and acidic residues. The interval 96 to 117 (KEEAEEEAKQKNSRAAKAAAAE) is disordered. Residues 108–117 (SRAAKAAAAE) show a composition bias toward low complexity.

This sequence belongs to the RNA polymerase subunit omega family. As to quaternary structure, the RNAP catalytic core consists of 2 alpha, 1 beta, 1 beta' and 1 omega subunit. When a sigma factor is associated with the core the holoenzyme is formed, which can initiate transcription.

The enzyme catalyses RNA(n) + a ribonucleoside 5'-triphosphate = RNA(n+1) + diphosphate. Its function is as follows. Promotes RNA polymerase assembly. Latches the N- and C-terminal regions of the beta' subunit thereby facilitating its interaction with the beta and alpha subunits. This Lactococcus lactis subsp. cremoris (strain MG1363) protein is DNA-directed RNA polymerase subunit omega.